Reading from the N-terminus, the 123-residue chain is WAP four-disulfide core domain protein 5 (123 aa).

A signal peptide spans 1–24 (MRTQSLLLLGALLAVGSQLPAVFG). WAP domains are found at residues 27 to 73 (KGEK…CVPR) and 74 to 121 (VSVK…RDPA). 8 cysteine pairs are disulfide-bonded: cysteine 34/cysteine 62, cysteine 41/cysteine 66, cysteine 49/cysteine 61, cysteine 55/cysteine 70, cysteine 81/cysteine 109, cysteine 88/cysteine 113, cysteine 96/cysteine 108, and cysteine 102/cysteine 117.

Its subcellular location is the secreted. Its function is as follows. Putative acid-stable proteinase inhibitor. The polypeptide is WAP four-disulfide core domain protein 5 (WFDC5) (Pan troglodytes (Chimpanzee)).